The sequence spans 132 residues: Small ribosomal subunit protein uS8 (132 aa).

The protein belongs to the universal ribosomal protein uS8 family. Part of the 30S ribosomal subunit. Contacts proteins S5 and S12.

One of the primary rRNA binding proteins, it binds directly to 16S rRNA central domain where it helps coordinate assembly of the platform of the 30S subunit. The protein is Small ribosomal subunit protein uS8 of Renibacterium salmoninarum (strain ATCC 33209 / DSM 20767 / JCM 11484 / NBRC 15589 / NCIMB 2235).